The sequence spans 806 residues: Phosphatidylinositol 4-kinase beta (806 aa).

In terms of domain architecture, PIK helical spans 55–247 (LDKVKLIRGS…GTKLRKLILS (193 aa)). 2 disordered regions span residues 69–104 (LDKI…SASR) and 253–310 (AHKK…DEPV). The segment covering 283 to 302 (DATVSISLSSNLKRTSSNPK) has biased composition (polar residues). In terms of domain architecture, PI3K/PI4K catalytic spans 525–791 (EPWQEKVRRI…MVDGSMRSIT (267 aa)). The tract at residues 531–537 (VRRIREG) is G-loop. The segment at 658–666 (QVKDRHNGN) is catalytic loop. The segment at 677–701 (HIDFGFILSSSPRNLGFETSAFKLT) is activation loop.

Belongs to the PI3/PI4-kinase family. Type III PI4K subfamily. It depends on Mg(2+) as a cofactor. Mn(2+) serves as cofactor.

Its subcellular location is the endomembrane system. The protein resides in the mitochondrion outer membrane. It localises to the rough endoplasmic reticulum membrane. It catalyses the reaction a 1,2-diacyl-sn-glycero-3-phospho-(1D-myo-inositol) + ATP = a 1,2-diacyl-sn-glycero-3-phospho-(1D-myo-inositol 4-phosphate) + ADP + H(+). Phosphorylates phosphatidylinositol (PI) in the first committed step in the production of the second messenger inositol-1,4,5,-trisphosphate (PIP). May play an important role in the inner ear development. This chain is Phosphatidylinositol 4-kinase beta (pi4kb), found in Xenopus tropicalis (Western clawed frog).